The following is a 150-amino-acid chain: MGKRVLAGGVFDILHPGHVAFLEEARKIAGKNGELVVVVARDETVRRLKRTPIVPEEQRVRMVSALKPVDRAILGHPRDFSITLKTVKPDVVVLGPDQDIDEKEVERWAERAGVDCEVRRIEKYERCPLDSTIKIVKRVIELWKRGELRV.

ATP-binding positions include 10-11 (VF), 15-18 (HPGH), Asp97, and Tyr124.

It belongs to the archaeal FAD synthase family. Homodimer. The cofactor is a divalent metal cation.

The catalysed reaction is FMN + ATP + H(+) = FAD + diphosphate. Its pathway is cofactor biosynthesis; FAD biosynthesis; FAD from FMN: step 1/1. In terms of biological role, catalyzes the transfer of the AMP portion of ATP to flavin mononucleotide (FMN) to produce flavin adenine dinucleotide (FAD) coenzyme. This is FAD synthase from Methanopyrus kandleri (strain AV19 / DSM 6324 / JCM 9639 / NBRC 100938).